The chain runs to 420 residues: Phosphoglycerate kinase, cytosolic (420 aa).

The (2R)-3-phosphoglycerate site is built by Val-23, Asp-24, Phe-25, Asn-26, Arg-39, Ser-61, His-62, Gly-64, Arg-65, Arg-135, His-171, and Arg-172. ADP-binding residues include Gly-217 and Ala-218. Position 217 (Gly-217) interacts with CDP. Residues Ala-218 and Lys-219 each contribute to the AMP site. Ala-218 is a binding site for ATP. Ala-218 serves as a coordination point for Mg(2+). Lys-219 contacts (2R)-3-phosphoglycerate. CDP is bound at residue Asp-222. Position 222 (Asp-222) interacts with Mg(2+). Positions 223 and 241 each coordinate ADP. Residue Lys-223 participates in AMP binding. Residue Lys-223 coordinates ATP. Gly-241 lines the CDP pocket. AMP-binding residues include Ala-242 and Ala-314. ATP contacts are provided by Ala-242 and Ala-314. Residues Ala-314 and Asn-338 each contribute to the ADP site. Gly-339 and Phe-344 together coordinate CDP. ADP-binding residues include Phe-344, Glu-345, Glu-377, and Ser-378. Position 345 (Glu-345) interacts with AMP. Residues Glu-345, Glu-377, and Ser-378 each coordinate ATP. Glu-377 contacts Mg(2+).

Belongs to the phosphoglycerate kinase family. In terms of assembly, monomer. Mg(2+) is required as a cofactor.

It is found in the cytoplasm. It catalyses the reaction (2R)-3-phosphoglycerate + ATP = (2R)-3-phospho-glyceroyl phosphate + ADP. It functions in the pathway carbohydrate degradation; glycolysis; pyruvate from D-glyceraldehyde 3-phosphate: step 2/5. This chain is Phosphoglycerate kinase, cytosolic, found in Trypanosoma brucei brucei.